The chain runs to 480 residues: MKKTKNNYYTTPLAIGLSTFALASIVYGGIQNETHASEKSNMDVSKKVAEVETSKPPVENTAEVETSKAPVENTAEVETSKAPVENTAEVETSKAPVENTAEVETSKAPVENTAEVETSKAPVENTAEVETSKAPVENTAEVETSKAPVENTAEVETSKAPVENTAEVETSKAPVENTAEVETSKAPVENTAEVETSKAPVENTAEVETSKAPVENTAEVETSKALVQNRTALRAATHEHSAQWLNNYKKGYGYGPYPLGINGGIHYGVDFFMNIGTPVKAISSGKIVEAGWSNYGGGNQIGLIENDGVHRQWYMHLSKYNVKVGDYVKAGQIIGWSGSTGYSTAPHLHFQRMVNSFSNSTAQDPMPFLKSAGYGKAGGTVTPTPNTGWKTNKYGTLYKSESASFTPNTDIITRTTGPFRSMPQSGVLKAGQTIHYDEVMKQDGHVWVGYTGNSGQRIYLPVRTWNKSTNTLGVLWGTIK.

The signal sequence occupies residues 1–23 (MKKTKNNYYTTPLAIGLSTFALA). Positions 24 to 234 (SIVYGGIQNE…ALVQNRTALR (211 aa)) are excised as a propeptide. 13 repeat units span residues 49 to 61 (AEVETSKPPVENT), 62 to 74 (AEVETSKAPVENT), 75 to 87 (AEVETSKAPVENT), 88 to 100 (AEVETSKAPVENT), 101 to 113 (AEVETSKAPVENT), 114 to 126 (AEVETSKAPVENT), 127 to 139 (AEVETSKAPVENT), 140 to 152 (AEVETSKAPVENT), 153 to 165 (AEVETSKAPVENT), 166 to 178 (AEVETSKAPVENT), 179 to 191 (AEVETSKAPVENT), 192 to 204 (AEVETSKAPVENT), and 205 to 217 (AEVETSKAPVENT). A 14 X 13 AA tandem repeats of A-E-V-E-T-S-K-[AP]-P-V-E-N-T region spans residues 49–230 (AEVETSKPPV…ETSKALVQNR (182 aa)). The interval 51–219 (VETSKPPVEN…SKAPVENTAE (169 aa)) is disordered. One copy of the 14; approximate repeat lies at 218–230 (AEVETSKALVQNR). Histidine 266 and aspartate 270 together coordinate Zn(2+). Residue histidine 347 is part of the active site. Histidine 349 is a Zn(2+) binding site. One can recognise an SH3b domain in the interval 400–468 (SESASFTPNT…YLPVRTWNKS (69 aa)).

The protein belongs to the peptidase M23B family. As to quaternary structure, monomer. Zn(2+) serves as cofactor.

It localises to the secreted. It catalyses the reaction Hydrolysis of the -Gly-|-Gly- bond in the pentaglycine inter-peptide link joining staphylococcal cell wall peptidoglycans.. Functionally, lyses staphylococcal cells by hydrolyzing the polyglycine interpeptide bridges of the peptidoglycan. This chain is Lysostaphin (lss), found in Staphylococcus staphylolyticus.